A 340-amino-acid chain; its full sequence is Phosphoribosylformylglycinamidine cyclo-ligase (340 aa).

The protein belongs to the AIR synthase family.

The protein localises to the cytoplasm. The catalysed reaction is 2-formamido-N(1)-(5-O-phospho-beta-D-ribosyl)acetamidine + ATP = 5-amino-1-(5-phospho-beta-D-ribosyl)imidazole + ADP + phosphate + H(+). It functions in the pathway purine metabolism; IMP biosynthesis via de novo pathway; 5-amino-1-(5-phospho-D-ribosyl)imidazole from N(2)-formyl-N(1)-(5-phospho-D-ribosyl)glycinamide: step 2/2. This Streptococcus pyogenes serotype M28 (strain MGAS6180) protein is Phosphoribosylformylglycinamidine cyclo-ligase.